The following is a 30-amino-acid chain: Snaclec carinactivase-1 regulatory subunit 17 kDa chain (30 aa).

Positions 1-30 constitute a C-type lectin domain; the sequence is DCLPGWSSHEGHCYKVFNQEMYWADAEKFC. An intrachain disulfide couples cysteine 2 to cysteine 13.

Belongs to the snaclec family. In terms of assembly, heterodimer of a metalloproteinase subunit and a regulatory subunit comprising two polypeptides disulfide-linked (14 kDa and 17 kDa chains). Expressed by the venom gland.

The protein localises to the secreted. Its function is as follows. Calcium-dependent prothrombin activator. This protein may activate prothrombin via recognition by the regulatory subunit of the calcium ion bound conformation of its gamma-carboxyglutamic acid (GLA) domain, and the subsequent conversion of prothrombin to active thrombin is catalyzed by the catalytic subunit. The chain is Snaclec carinactivase-1 regulatory subunit 17 kDa chain from Echis carinatus (Saw-scaled viper).